Consider the following 143-residue polypeptide: Large ribosomal subunit protein uL13 (143 aa).

It belongs to the universal ribosomal protein uL13 family. Part of the 50S ribosomal subunit.

Its function is as follows. This protein is one of the early assembly proteins of the 50S ribosomal subunit, although it is not seen to bind rRNA by itself. It is important during the early stages of 50S assembly. The protein is Large ribosomal subunit protein uL13 of Finegoldia magna (strain ATCC 29328 / DSM 20472 / WAL 2508) (Peptostreptococcus magnus).